Consider the following 282-residue polypeptide: 2-dehydro-3-deoxyphosphooctonate aldolase (282 aa).

Belongs to the KdsA family.

The protein localises to the cytoplasm. The enzyme catalyses D-arabinose 5-phosphate + phosphoenolpyruvate + H2O = 3-deoxy-alpha-D-manno-2-octulosonate-8-phosphate + phosphate. It participates in carbohydrate biosynthesis; 3-deoxy-D-manno-octulosonate biosynthesis; 3-deoxy-D-manno-octulosonate from D-ribulose 5-phosphate: step 2/3. It functions in the pathway bacterial outer membrane biogenesis; lipopolysaccharide biosynthesis. The polypeptide is 2-dehydro-3-deoxyphosphooctonate aldolase (Shewanella sediminis (strain HAW-EB3)).